The sequence spans 338 residues: Large ribosomal subunit protein uL3 (338 aa).

The disordered stretch occupies residues 230–258 (HRKGHRRTGTIGPQAPAVMFTQPRPGQMG).

This sequence belongs to the universal ribosomal protein uL3 family. Part of the 50S ribosomal subunit. Forms a cluster with proteins L14 and L24e.

In terms of biological role, one of the primary rRNA binding proteins, it binds directly near the 3'-end of the 23S rRNA, where it nucleates assembly of the 50S subunit. The sequence is that of Large ribosomal subunit protein uL3 from Pyrobaculum aerophilum (strain ATCC 51768 / DSM 7523 / JCM 9630 / CIP 104966 / NBRC 100827 / IM2).